The chain runs to 309 residues: 4-hydroxy-3-methylbut-2-enyl diphosphate reductase (309 aa).

Cys-12 provides a ligand contact to [4Fe-4S] cluster. Residues His-41 and His-74 each contribute to the (2E)-4-hydroxy-3-methylbut-2-enyl diphosphate site. 2 residues coordinate dimethylallyl diphosphate: His-41 and His-74. Positions 41 and 74 each coordinate isopentenyl diphosphate. Cys-96 serves as a coordination point for [4Fe-4S] cluster. Residue His-124 coordinates (2E)-4-hydroxy-3-methylbut-2-enyl diphosphate. Position 124 (His-124) interacts with dimethylallyl diphosphate. Isopentenyl diphosphate is bound at residue His-124. Glu-126 functions as the Proton donor in the catalytic mechanism. Thr-167 is a (2E)-4-hydroxy-3-methylbut-2-enyl diphosphate binding site. Cys-197 contributes to the [4Fe-4S] cluster binding site. 4 residues coordinate (2E)-4-hydroxy-3-methylbut-2-enyl diphosphate: Ser-225, Ser-226, Asn-227, and Ser-269. Dimethylallyl diphosphate is bound by residues Ser-225, Ser-226, Asn-227, and Ser-269. Residues Ser-225, Ser-226, Asn-227, and Ser-269 each coordinate isopentenyl diphosphate.

It belongs to the IspH family. Requires [4Fe-4S] cluster as cofactor.

The enzyme catalyses isopentenyl diphosphate + 2 oxidized [2Fe-2S]-[ferredoxin] + H2O = (2E)-4-hydroxy-3-methylbut-2-enyl diphosphate + 2 reduced [2Fe-2S]-[ferredoxin] + 2 H(+). It carries out the reaction dimethylallyl diphosphate + 2 oxidized [2Fe-2S]-[ferredoxin] + H2O = (2E)-4-hydroxy-3-methylbut-2-enyl diphosphate + 2 reduced [2Fe-2S]-[ferredoxin] + 2 H(+). Its pathway is isoprenoid biosynthesis; dimethylallyl diphosphate biosynthesis; dimethylallyl diphosphate from (2E)-4-hydroxy-3-methylbutenyl diphosphate: step 1/1. The protein operates within isoprenoid biosynthesis; isopentenyl diphosphate biosynthesis via DXP pathway; isopentenyl diphosphate from 1-deoxy-D-xylulose 5-phosphate: step 6/6. Functionally, catalyzes the conversion of 1-hydroxy-2-methyl-2-(E)-butenyl 4-diphosphate (HMBPP) into a mixture of isopentenyl diphosphate (IPP) and dimethylallyl diphosphate (DMAPP). Acts in the terminal step of the DOXP/MEP pathway for isoprenoid precursor biosynthesis. This Shewanella halifaxensis (strain HAW-EB4) protein is 4-hydroxy-3-methylbut-2-enyl diphosphate reductase.